Reading from the N-terminus, the 254-residue chain is GTP cyclohydrolase 1 type 2 homolog (254 aa).

H68, H69, D106, H222, and E226 together coordinate a divalent metal cation.

This sequence belongs to the GTP cyclohydrolase I type 2/NIF3 family. As to quaternary structure, homohexamer.

This Allochromatium vinosum (strain ATCC 17899 / DSM 180 / NBRC 103801 / NCIMB 10441 / D) (Chromatium vinosum) protein is GTP cyclohydrolase 1 type 2 homolog.